A 64-amino-acid polypeptide reads, in one-letter code: uncharacterized protein (64 aa).

Residues 1–64 (MNNPNIVPPH…QNQPPQRPQY (64 aa)) form a disordered region. Low complexity predominate over residues 8 to 32 (PPHFNQHQQQNHNQNQPPHHMNNPN).

This is an uncharacterized protein from Dictyostelium discoideum (Social amoeba).